A 370-amino-acid polypeptide reads, in one-letter code: ATP synthase gamma chain, chloroplastic (370 aa).

A chloroplast-targeting transit peptide spans 1–55 (MKFFCVAGLLASAAAFQAQPAAFTTYSPAVGGATSNVFSESSSPAHRNRRATIVM). The active site involves Cys145.

Belongs to the ATPase gamma chain family. In terms of assembly, F-type ATPases have 2 components, CF(1) - the catalytic core - and CF(0) - the membrane proton channel. CF(1) has five subunits: alpha(3), beta(3), gamma(1), delta(1), epsilon(1). CF(0) has four main subunits: a, b, b' and c.

The protein resides in the plastid. It localises to the chloroplast thylakoid membrane. Functionally, produces ATP from ADP in the presence of a proton gradient across the membrane. The gamma chain is believed to be important in regulating ATPase activity and the flow of protons through the CF(0) complex. The polypeptide is ATP synthase gamma chain, chloroplastic (ATPC) (Trieres chinensis (Marine centric diatom)).